The primary structure comprises 180 residues: Small ribosomal subunit protein uS5 (180 aa).

One can recognise an S5 DRBM domain in the interval 24–87 (MIEKLVAVNR…EQARKNLATV (64 aa)).

Belongs to the universal ribosomal protein uS5 family. Part of the 30S ribosomal subunit. Contacts proteins S4 and S8.

Its function is as follows. With S4 and S12 plays an important role in translational accuracy. Functionally, located at the back of the 30S subunit body where it stabilizes the conformation of the head with respect to the body. This chain is Small ribosomal subunit protein uS5, found in Xanthomonas axonopodis pv. citri (strain 306).